Here is a 403-residue protein sequence, read N- to C-terminus: GPI-N-acetylgalactosamine transferase PGAP4 (403 aa).

Over 1–22 the chain is Cytoplasmic; that stretch reads MSTSTSPAAMLLRRLRRLSWGS. A helical membrane pass occupies residues 23–43; sequence TAVQLFILTVVTFGLLAPLAC. The Lumenal segment spans residues 44 to 259; that stretch reads HRLLHSYFYL…RLQHYINPEP (216 aa). A glycan (N-linked (GalNAc...) asparagine) is linked at N87. Residue V109 participates in UDP-N-acetyl-alpha-D-galactosamine binding. Intrachain disulfides connect C132-C136 and C144-C194. Positions 211-213 match the DXD motif motif; it reads EDD. The chain crosses the membrane as a helical span at residues 260–280; sequence MRILEWVGVGMLLGPLLTWIY. The Cytoplasmic portion of the chain corresponds to 281–287; the sequence is MRFASRP. The chain crosses the membrane as a helical span at residues 288-308; that stretch reads GFSWPVMLFFSLYSMGLVELV. At 309–403 the chain is on the lumenal side; that stretch reads GRHYFLELRR…LRYNFHPSLL (95 aa). Residues C332 and C333 are joined by a disulfide bond. Residues T334, P335, and K362 each contribute to the UDP-N-acetyl-alpha-D-galactosamine site.

The protein belongs to the PGAP4 family. Post-translationally, glycosylated.

Its subcellular location is the golgi apparatus membrane. Golgi-resident glycosylphosphatidylinositol (GPI)-N-acetylgalactosamine transferase that catalyzes the N-acetyl-beta-D-galactosamine transfer from an UDP-N-acetyl-alpha-D-galactosamine to the 4-OH-position of the first mannose of the glycosylphosphatidylinositol (GPI) of a GPI-anchored protein (GPI-AP). This modification occurs after the fatty acid remodeling step of the GPI-anchor maturation. The polypeptide is GPI-N-acetylgalactosamine transferase PGAP4 (Homo sapiens (Human)).